The sequence spans 206 residues: Large ribosomal subunit protein uL4 (206 aa).

The interval 47–79 (GTKGQKNRSAVRGGGAKPWAQKGSGRARAGTSR) is disordered. Low complexity predominate over residues 69–79 (GSGRARAGTSR).

It belongs to the universal ribosomal protein uL4 family. Part of the 50S ribosomal subunit.

In terms of biological role, one of the primary rRNA binding proteins, this protein initially binds near the 5'-end of the 23S rRNA. It is important during the early stages of 50S assembly. It makes multiple contacts with different domains of the 23S rRNA in the assembled 50S subunit and ribosome. Forms part of the polypeptide exit tunnel. In Hydrogenovibrio crunogenus (strain DSM 25203 / XCL-2) (Thiomicrospira crunogena), this protein is Large ribosomal subunit protein uL4.